Consider the following 268-residue polypeptide: 14-3-3-like protein GF14 iota (268 aa).

Ser70 and Ser193 each carry phosphoserine. Thr214 is modified (phosphothreonine). Residues Asp240 to Asn268 form a disordered region. The span at Asp248 to Lys261 shows a compositional bias: basic and acidic residues.

The protein belongs to the 14-3-3 family. In terms of tissue distribution, expressed in flowers.

It is found in the nucleus. It localises to the cytoplasm. In terms of biological role, is associated with a DNA binding complex that binds to the G box, a well-characterized cis-acting DNA regulatory element found in plant genes. This chain is 14-3-3-like protein GF14 iota, found in Arabidopsis thaliana (Mouse-ear cress).